A 160-amino-acid polypeptide reads, in one-letter code: SUMO-conjugating enzyme SCE1 (160 aa).

Ala-2 bears the N-acetylalanine mark. Residues Ile-5 to Ala-158 enclose the UBC core domain. The active-site Glycyl thioester intermediate is Cys-94.

This sequence belongs to the ubiquitin-conjugating enzyme family. Interacts with SIZ1 (via PHD domain) and MMS21. Interacts with TCP14 and TCP15. Interacts with KIN10.

The protein operates within protein modification; protein sumoylation. Functionally, SUMO-conjugating enzyme that accepts the SUMO proteins from the E1 SUMO-activating heterodimer SAE1/SAE2 and catalyzes its covalent attachment to other proteins with the E3 SUMO ligases SIZ1 and MMS21. Associates with SIZ1 for sumoylation of the transcription factor GTE3. The sequence is that of SUMO-conjugating enzyme SCE1 (SCE1) from Arabidopsis thaliana (Mouse-ear cress).